Here is a 192-residue protein sequence, read N- to C-terminus: Phosphoheptose isomerase (192 aa).

In terms of domain architecture, SIS spans 37-192; sequence LADSFKAGGK…IQLIEKEMVK (156 aa). 52–54 is a substrate binding site; that stretch reads NGG. Zn(2+) contacts are provided by His-61 and Glu-65. Substrate-binding positions include Glu-65, 93–94, 119–121, Ser-124, and Gln-172; these read ND and STS. Gln-172 and His-180 together coordinate Zn(2+).

It belongs to the SIS family. GmhA subfamily. In terms of assembly, homotetramer. Zn(2+) serves as cofactor.

The protein localises to the cytoplasm. The catalysed reaction is 2 D-sedoheptulose 7-phosphate = D-glycero-alpha-D-manno-heptose 7-phosphate + D-glycero-beta-D-manno-heptose 7-phosphate. It functions in the pathway carbohydrate biosynthesis; D-glycero-D-manno-heptose 7-phosphate biosynthesis; D-glycero-alpha-D-manno-heptose 7-phosphate and D-glycero-beta-D-manno-heptose 7-phosphate from sedoheptulose 7-phosphate: step 1/1. Functionally, catalyzes the isomerization of sedoheptulose 7-phosphate in D-glycero-D-manno-heptose 7-phosphate. In Salmonella agona (strain SL483), this protein is Phosphoheptose isomerase.